The sequence spans 348 residues: Neuronal growth regulator 1 (348 aa).

An N-terminal signal peptide occupies residues Met-1–Ser-31. Ig-like C2-type domains are found at residues Val-32–Thr-128, Pro-133–Val-215, and Pro-219–Asn-307. Cysteines 54 and 112 form a disulfide. 2 N-linked (GlcNAc...) asparagine glycosylation sites follow: Asn-67 and Asn-149. Cystine bridges form between Cys-154–Cys-197 and Cys-239–Cys-291. Tyr-181 is modified (phosphotyrosine). N-linked (GlcNAc...) asparagine glycans are attached at residues Asn-269, Asn-280, Asn-288, and Asn-301. Gly-318 carries the GPI-anchor amidated glycine lipid modification. A propeptide spans Ser-319 to Gln-348 (removed in mature form).

The protein belongs to the immunoglobulin superfamily. IgLON family. In terms of tissue distribution, expressed in brain.

The protein resides in the cell membrane. Its function is as follows. May be involved in cell-adhesion. May function as a trans-neural growth-promoting factor in regenerative axon sprouting in the mammalian brain. The sequence is that of Neuronal growth regulator 1 (Negr1) from Mus musculus (Mouse).